Reading from the N-terminus, the 299-residue chain is tRNA uridine(34) hydroxylase (299 aa).

The Rhodanese domain maps to 132–226; it reads ASRPVVMLDT…YFEEVGGAHY (95 aa). The active-site Cysteine persulfide intermediate is the C186.

It belongs to the TrhO family.

The catalysed reaction is uridine(34) in tRNA + AH2 + O2 = 5-hydroxyuridine(34) in tRNA + A + H2O. Functionally, catalyzes oxygen-dependent 5-hydroxyuridine (ho5U) modification at position 34 in tRNAs. This is tRNA uridine(34) hydroxylase from Burkholderia pseudomallei (strain K96243).